We begin with the raw amino-acid sequence, 432 residues long: 3-phosphoshikimate 1-carboxyvinyltransferase (432 aa).

Lys-23, Ser-24, and Arg-28 together coordinate 3-phosphoshikimate. Residue Lys-23 participates in phosphoenolpyruvate binding. Phosphoenolpyruvate contacts are provided by Gly-95 and Arg-123. 3-phosphoshikimate contacts are provided by Ser-167, Gln-169, Asp-317, and Lys-344. Phosphoenolpyruvate is bound at residue Gln-169. The active-site Proton acceptor is the Asp-317. Positions 348 and 390 each coordinate phosphoenolpyruvate.

Belongs to the EPSP synthase family. As to quaternary structure, monomer.

It is found in the cytoplasm. It carries out the reaction 3-phosphoshikimate + phosphoenolpyruvate = 5-O-(1-carboxyvinyl)-3-phosphoshikimate + phosphate. It participates in metabolic intermediate biosynthesis; chorismate biosynthesis; chorismate from D-erythrose 4-phosphate and phosphoenolpyruvate: step 6/7. Functionally, catalyzes the transfer of the enolpyruvyl moiety of phosphoenolpyruvate (PEP) to the 5-hydroxyl of shikimate-3-phosphate (S3P) to produce enolpyruvyl shikimate-3-phosphate and inorganic phosphate. The protein is 3-phosphoshikimate 1-carboxyvinyltransferase of Staphylococcus aureus (strain MRSA252).